The sequence spans 350 residues: Cytosolic sulfotransferase 18 (350 aa).

M1 is subject to N-acetylmethionine. Low complexity predominate over residues 1–17 (MESETLTAKATITTTTL). The tract at residues 1–28 (MESETLTAKATITTTTLPSHDETKTEST) is disordered. The span at 19–28 (SHDETKTEST) shows a compositional bias: basic and acidic residues. A 3'-phosphoadenylyl sulfate-binding site is contributed by 93-98 (KTGTTW). H155 (proton acceptor) is an active-site residue. 3'-phosphoadenylyl sulfate is bound by residues R177, S185, Y243, and 313–315 (RKG).

It belongs to the sulfotransferase 1 family. In terms of tissue distribution, expressed in roots, leaves and stems. Barely detected in siliques and flowers.

The protein localises to the cytoplasm. It carries out the reaction an aliphatic (Z)-desulfo-glucosinolate + 3'-phosphoadenylyl sulfate = a (Z)-omega-(methylsulfanyl)-N-sulfo-alkylhydroximate S-glucoside + adenosine 3',5'-bisphosphate + H(+). Inhibited by phosphoadenosine 5'-phosphate (PAP). Sulfotransferase that utilizes 3'-phospho-5'-adenylyl sulfate (PAPS) as sulfonate donor to catalyze the sulfate conjugation of desulfo-glucosinolates (dsGSs), the final step in the biosynthesis of the glucosinolate core structure. Preferred substrate are the long-chain desulfo-glucosinolates, 7-methylthioheptyl and 8-methylthiooctyl, derived from methionine. Substrate preference is desulfo-benzyl glucosinolate &gt; desulfo-4-methylthiobutyl glucosinolate &gt; desulfo-6-methylthiohexyl glucosinolate &gt; desulfo-3-methylthiopropyl glucosinolate &gt; desulfo-indol-3-yl methyl glucosinolate &gt; desulfo-singrin &gt; desulfo-3-butenyl glucosinolate. The polypeptide is Cytosolic sulfotransferase 18 (SOT18) (Arabidopsis thaliana (Mouse-ear cress)).